Consider the following 1852-residue polypeptide: Chitin synthase csmA (1852 aa).

The interval 1–20 is disordered; sequence MVGTLPAGHTPSHVQSSLPS. Residues 1–787 enclose the Myosin motor domain; the sequence is MVGTLPAGHT…CWADLAKVGE (787 aa). The N-linked (GlcNAc...) asparagine glycan is linked to asparagine 58. 102–109 provides a ligand contact to ATP; it reads GESGAGKT. The interval 599–646 is disordered; it reads SSKPLRMPSMARRKTSPASRLTFDATPAEDPYETESQTGSSAKNSSAK. N-linked (GlcNAc...) asparagine glycosylation is present at asparagine 642. An actin-binding region spans residues 667-691; the sequence is LDIVNKCLTSGNLNPYFVFCLKPND. Asparagine 840 is a glycosylation site (N-linked (GlcNAc...) asparagine). A run of 2 helical transmembrane segments spans residues 895–915 and 930–950; these read WMAI…RYIG and FAIN…IVGF. One can recognise a Cytochrome b5 heme-binding domain in the interval 958–1017; it reads QHVYSPAELSSHDGKDGHSSYTSIRGLVLDLGEFMDSHYPGIVPDSALKKYAGVDSTALF. N-linked (GlcNAc...) asparagine glycosylation is found at asparagine 1044 and asparagine 1195. Residues 1205 to 1225 form a helical membrane-spanning segment; it reads FILAISVLICSVIVFKFFAAL. N-linked (GlcNAc...) asparagine glycans are attached at residues asparagine 1428, asparagine 1462, and asparagine 1568. The next 3 membrane-spanning stretches (helical) occupy residues 1600–1620, 1626–1646, and 1653–1673; these read ISTI…VWLV, IPWT…IIFI, and MIGW…ALPL. The 56-residue stretch at 1794-1849 folds into the DEK-C domain; it reads LPSDDAILSEIRDILRTADLMTVTKKNIKQELERRFGVNLDAKRPYINSATEAVLS.

This sequence in the N-terminal section; belongs to the TRAFAC class myosin-kinesin ATPase superfamily. Myosin family. In the C-terminal section; belongs to the chitin synthase family. Class V subfamily. Binds F-actin via its N-terminal myosin motor-like domain (MMD). Interacts with kibesin kinA.

The protein resides in the cell membrane. It is found in the cell septum. Its subcellular location is the cell tip. It catalyses the reaction [(1-&gt;4)-N-acetyl-beta-D-glucosaminyl](n) + UDP-N-acetyl-alpha-D-glucosamine = [(1-&gt;4)-N-acetyl-beta-D-glucosaminyl](n+1) + UDP + H(+). In terms of biological role, polymerizes chitin, a structural polymer of the cell wall and septum, by transferring the sugar moiety of UDP-GlcNAc to the non-reducing end of the growing chitin polymer. Plays an important role in polarized hyphal cell wall synthesis and maintenance of cell wall integrity. Its role in growth and morphogenesis is particularly important under low osmotic conditions. The protein is Chitin synthase csmA of Emericella nidulans (Aspergillus nidulans).